A 152-amino-acid polypeptide reads, in one-letter code: Lipoprotein signal peptidase (152 aa).

Helical transmembrane passes span 5–25, 61–81, and 84–104; these read LFVL…FWIV, WFFV…LATH, and LNIW…GNFI. Residues Asp-114 and Asp-130 contribute to the active site. A helical transmembrane segment spans residues 125 to 145; sequence IFNVADSYLTVGVILLVICLW.

It belongs to the peptidase A8 family.

The protein resides in the cell membrane. The catalysed reaction is Release of signal peptides from bacterial membrane prolipoproteins. Hydrolyzes -Xaa-Yaa-Zaa-|-(S,diacylglyceryl)Cys-, in which Xaa is hydrophobic (preferably Leu), and Yaa (Ala or Ser) and Zaa (Gly or Ala) have small, neutral side chains.. It participates in protein modification; lipoprotein biosynthesis (signal peptide cleavage). This protein specifically catalyzes the removal of signal peptides from prolipoproteins. The protein is Lipoprotein signal peptidase of Streptococcus pyogenes serotype M3 (strain ATCC BAA-595 / MGAS315).